The sequence spans 304 residues: Quinolinate synthase 1 (304 aa).

Iminosuccinate-binding residues include His24 and Ser41. Cys86 provides a ligand contact to [4Fe-4S] cluster. Iminosuccinate is bound by residues Tyr112–Asn114 and Ser129. Cys171 contacts [4Fe-4S] cluster. Residues His197–Glu199 and Thr214 each bind iminosuccinate. [4Fe-4S] cluster is bound at residue Cys259.

Belongs to the quinolinate synthase family. Type 2 subfamily. It depends on [4Fe-4S] cluster as a cofactor.

It is found in the cytoplasm. The catalysed reaction is iminosuccinate + dihydroxyacetone phosphate = quinolinate + phosphate + 2 H2O + H(+). The protein operates within cofactor biosynthesis; NAD(+) biosynthesis; quinolinate from iminoaspartate: step 1/1. In terms of biological role, catalyzes the condensation of iminoaspartate with dihydroxyacetone phosphate to form quinolinate. The protein is Quinolinate synthase 1 of Methanosarcina acetivorans (strain ATCC 35395 / DSM 2834 / JCM 12185 / C2A).